A 443-amino-acid polypeptide reads, in one-letter code: Chromosomal replication initiator protein DnaA (443 aa).

Positions 1–76 (METKALWEKL…KSVLNSYVSV (76 aa)) are domain I, interacts with DnaA modulators. Positions 76 to 99 (VDFLTKEIFEKNTKKENKKEPINT) are domain II. Residues 100 to 320 (VLSENALTFE…GLVNRLLFFG (221 aa)) form a domain III, AAA+ region region. Residues G145, G147, K148, and T149 each contribute to the ATP site. Residues 321–443 (IQNDLGHIID…ESLKNEIIGK (123 aa)) form a domain IV, binds dsDNA region.

The protein belongs to the DnaA family. In terms of assembly, oligomerizes as a right-handed, spiral filament on DNA at oriC.

The protein localises to the cytoplasm. Functionally, plays an essential role in the initiation and regulation of chromosomal replication. ATP-DnaA binds to the origin of replication (oriC) to initiate formation of the DNA replication initiation complex once per cell cycle. Binds the DnaA box (a 9 base pair repeat at the origin) and separates the double-stranded (ds)DNA. Forms a right-handed helical filament on oriC DNA; dsDNA binds to the exterior of the filament while single-stranded (ss)DNA is stabiized in the filament's interior. The ATP-DnaA-oriC complex binds and stabilizes one strand of the AT-rich DNA unwinding element (DUE), permitting loading of DNA polymerase. After initiation quickly degrades to an ADP-DnaA complex that is not apt for DNA replication. Binds acidic phospholipids. The sequence is that of Chromosomal replication initiator protein DnaA from Mesoplasma florum (strain ATCC 33453 / NBRC 100688 / NCTC 11704 / L1) (Acholeplasma florum).